Consider the following 181-residue polypeptide: Shikimate kinase 2 (181 aa).

12 to 17 serves as a coordination point for ATP; it reads GCGKTT. Residues Thr-16 and Asp-32 each coordinate Mg(2+). Substrate-binding residues include Asp-34, Arg-58, and Gly-79. An LID domain region spans residues 112–126; it reads EAEPEVGLRPTLTGK. Arg-120 contributes to the ATP binding site. Arg-139 serves as a coordination point for substrate.

Belongs to the shikimate kinase family. AroL subfamily. In terms of assembly, monomer. Mg(2+) is required as a cofactor.

Its subcellular location is the cytoplasm. It catalyses the reaction shikimate + ATP = 3-phosphoshikimate + ADP + H(+). Its pathway is metabolic intermediate biosynthesis; chorismate biosynthesis; chorismate from D-erythrose 4-phosphate and phosphoenolpyruvate: step 5/7. In terms of biological role, catalyzes the specific phosphorylation of the 3-hydroxyl group of shikimic acid using ATP as a cosubstrate. This Escherichia fergusonii (strain ATCC 35469 / DSM 13698 / CCUG 18766 / IAM 14443 / JCM 21226 / LMG 7866 / NBRC 102419 / NCTC 12128 / CDC 0568-73) protein is Shikimate kinase 2.